A 348-amino-acid chain; its full sequence is MSTIEEQLKALREETLTSLKQITAGNEKEMQDLRVSVLGKKGSLTEILKGMKDVSAEMRPIIGKHVNEARDVLTAAFEETAKLLEEKKVAAQLASESIDVTLPGRPVATGHRHVLTQTSEEIEDIFIGMGYQVVDGFEVEQDYYNFERMNLPKDHPARDMQDTFYITEEILLRTHTSPVQARAMDAHDFSKGPLKMISPGRVFRRDTDDATHSHQFHQIEGLVVGKNISMADLQGTLQLIVQKMFGEERQIRLRPSYFPFTEPSVEVDVSCFKCGGEGCNVCKKTGWIEIMGAGMVHPRVLEMSGIDATVYSGFAFGLGQERVAMLRYGINDIRGFYQGDVRFSEQFK.

Glu262 lines the Mg(2+) pocket.

Belongs to the class-II aminoacyl-tRNA synthetase family. Phe-tRNA synthetase alpha subunit type 1 subfamily. Tetramer of two alpha and two beta subunits. The cofactor is Mg(2+).

The protein localises to the cytoplasm. The catalysed reaction is tRNA(Phe) + L-phenylalanine + ATP = L-phenylalanyl-tRNA(Phe) + AMP + diphosphate + H(+). The polypeptide is Phenylalanine--tRNA ligase alpha subunit (Streptococcus pneumoniae serotype 2 (strain D39 / NCTC 7466)).